A 152-amino-acid chain; its full sequence is Ribonuclease pancreatic beta-type (152 aa).

Positions 1 to 25 are cleaved as a signal peptide; it reads MGLEKSFILFSLLVLVLGWVQPSLG. The segment covering 31 to 45 has biased composition (basic and acidic residues); the sequence is SSADKFKRQHMDPES. Residues 31–53 are disordered; that stretch reads SSADKFKRQHMDPESPSKSSPTY. Residues K35 and R38 each coordinate substrate. H40 serves as the catalytic Proton acceptor. Disulfide bonds link C54–C112, C68–C123, C86–C138, and C93–C100. Substrate-binding positions include 69–73, K94, and R113; that span reads KPVNT. H147 (proton donor) is an active-site residue.

The protein belongs to the pancreatic ribonuclease family. As to quaternary structure, monomer.

The protein resides in the secreted. The catalysed reaction is an [RNA] containing cytidine + H2O = an [RNA]-3'-cytidine-3'-phosphate + a 5'-hydroxy-ribonucleotide-3'-[RNA].. It carries out the reaction an [RNA] containing uridine + H2O = an [RNA]-3'-uridine-3'-phosphate + a 5'-hydroxy-ribonucleotide-3'-[RNA].. In terms of biological role, endonuclease that catalyzes the cleavage of RNA on the 3' side of pyrimidine nucleotides. Acts on single-stranded and double-stranded RNA. This is Ribonuclease pancreatic beta-type from Rattus exulans (Polynesian rat).